A 156-amino-acid polypeptide reads, in one-letter code: Crossover junction endodeoxyribonuclease RuvC (156 aa).

Catalysis depends on residues D7, E67, and D139. 3 residues coordinate Mg(2+): D7, E67, and D139.

The protein belongs to the RuvC family. In terms of assembly, homodimer which binds Holliday junction (HJ) DNA. The HJ becomes 2-fold symmetrical on binding to RuvC with unstacked arms; it has a different conformation from HJ DNA in complex with RuvA. In the full resolvosome a probable DNA-RuvA(4)-RuvB(12)-RuvC(2) complex forms which resolves the HJ. The cofactor is Mg(2+).

The protein localises to the cytoplasm. It carries out the reaction Endonucleolytic cleavage at a junction such as a reciprocal single-stranded crossover between two homologous DNA duplexes (Holliday junction).. The RuvA-RuvB-RuvC complex processes Holliday junction (HJ) DNA during genetic recombination and DNA repair. Endonuclease that resolves HJ intermediates. Cleaves cruciform DNA by making single-stranded nicks across the HJ at symmetrical positions within the homologous arms, yielding a 5'-phosphate and a 3'-hydroxyl group; requires a central core of homology in the junction. The consensus cleavage sequence is 5'-(A/T)TT(C/G)-3'. Cleavage occurs on the 3'-side of the TT dinucleotide at the point of strand exchange. HJ branch migration catalyzed by RuvA-RuvB allows RuvC to scan DNA until it finds its consensus sequence, where it cleaves and resolves the cruciform DNA. The chain is Crossover junction endodeoxyribonuclease RuvC from Sphingopyxis alaskensis (strain DSM 13593 / LMG 18877 / RB2256) (Sphingomonas alaskensis).